The following is a 220-amino-acid chain: HTH-type transcriptional repressor GlaR (220 aa).

The 69-residue stretch at 1 to 69 (MTITSLDGYR…NQKGYRVASM (69 aa)) folds into the HTH gntR-type domain. Positions 29 to 48 (MSLLTSRYALGVGPLREALS) form a DNA-binding region, H-T-H motif.

It localises to the cytoplasm. Its activity is regulated as follows. The repressive effect at the glaH promoter site is specifically relieved upon glutarate binding. In terms of biological role, negatively regulates the expression of the glaH-lhgD-gabDTP operon in a temporal manner during entry into stationary phase or during the first few hours of carbon starvation. Thereby is involved in the regulation of a L-lysine degradation pathway that proceeds via cadaverine, glutarate and L-2-hydroxyglutarate. Binds to two primary and two secondary sites in the promoter region of the glaH operon with the consensus sequences TTGTN5TTTT and ATGTN5TTTT of the primary sites, each separated by six nucleotides. This chain is HTH-type transcriptional repressor GlaR, found in Escherichia coli (strain K12).